The sequence spans 461 residues: Early growth response factor homolog 1 (461 aa).

Disordered stretches follow at residues 1-25 (MALHEPPSKLNRHSHSNLLKPPSLN), 96-152 (TLMP…ELTL), and 232-308 (DVLH…YSSL). 4 stretches are compositionally biased toward polar residues: residues 96-105 (TLMPAPSSSY), 129-144 (GSNSFGVPRMTNGNSK), 249-265 (LGSSLQNEHPQSNSRPS), and 272-291 (QRTNTSASLTRSMDHSSMSP). Over residues 299–308 (YSNSASYSSL) the composition is skewed to low complexity. 3 consecutive C2H2-type zinc fingers follow at residues 374–398 (YKCPRDGCDRRFSRSDELTRHIRIH), 404–426 (FQCRICMRAFSRSDHLTTHVRTH), and 432–454 (FSCDICGRKFARSDERKRHTKVH).

This sequence belongs to the EGR C2H2-type zinc-finger protein family. In terms of tissue distribution, expressed in sheath cells and distal tip cells of the somatic gonad, as well as in the intestine and sperm (at protein level). Expression not observed in oocytes (at protein level).

It localises to the nucleus. It is found in the cytoplasm. Its subcellular location is the perinuclear region. Its function is as follows. Sequence-specific DNA-binding transcription factor. Plays a role in oocyte development, acting cell-autonomously in the somatic gonad. Involved in negative regulation of oocyte MAPK activation and inhibits oocyte maturation and ovulation. In Caenorhabditis elegans, this protein is Early growth response factor homolog 1.